Here is a 157-residue protein sequence, read N- to C-terminus: Probable succinate transporter subunit YjjB (157 aa).

4 helical membrane-spanning segments follow: residues phenylalanine 8–phenylalanine 28, leucine 57–tryptophan 77, valine 87–isoleucine 107, and phenylalanine 129–tryptophan 149.

It belongs to the ThrE exporter (TC 2.A.79) family. In terms of assembly, the transporter is composed of YjjB and YjjP.

The protein resides in the cell inner membrane. Functionally, involved in succinate export with YjjP. Both proteins are required for export. The sequence is that of Probable succinate transporter subunit YjjB from Shigella boydii serotype 4 (strain Sb227).